The chain runs to 245 residues: 8-amino-3,8-dideoxy-manno-octulosonate cytidylyltransferase (245 aa).

It belongs to the KdsB family.

The protein localises to the cytoplasm. It catalyses the reaction 8-amino-3,8-dideoxy-alpha-D-manno-octulosonate + CTP = CMP-8-amino-3,8-dideoxy-alpha-D-manno-oct-2-ulosonate + diphosphate. Its pathway is bacterial outer membrane biogenesis; lipopolysaccharide biosynthesis. Its function is as follows. Activates KDO8N (a required 8-carbon sugar) for incorporation into bacterial lipopolysaccharide in the Shewanella genus. The chain is 8-amino-3,8-dideoxy-manno-octulosonate cytidylyltransferase from Shewanella amazonensis (strain ATCC BAA-1098 / SB2B).